The sequence spans 674 residues: Glutaminase kidney isoform, mitochondrial (674 aa).

The N-terminal 54 residues, 1–54 (MMRLRGSAMLRELLLRPPAAVGGVLRRTQPLGTLCRRPRGGSRPAAGLVAAARL), are a transit peptide targeting the mitochondrion. The tract at residues 56 to 123 (PWWGGGGRAK…PGETDAFGNS (68 aa)) is disordered. A compositionally biased stretch (gly residues) spans 58–71 (WGGGGRAKGPGSGG). Residues 89-101 (PPQQQQQQQQQPG) show a composition bias toward low complexity. 2 positions are modified to N6-succinyllysine: Lys-135 and Lys-169. Ser-291 is a binding site for substrate. Position 316 is an N6-acetyllysine (Lys-316). The interval 320–327 (GLRFNKLF) is highly mobile activation loop. Residues Asn-340, Glu-386, Asn-393, Tyr-419, Tyr-471, and Val-489 each contribute to the substrate site. ANK repeat units follow at residues 590–619 (DSRT…VNPF) and 624–653 (WNNT…QYTP). Positions 652–674 (TPQGDSDDGKENQTVHKNLDGLL) are disordered. Phosphoserine is present on Ser-657. The segment covering 658–674 (DDGKENQTVHKNLDGLL) has biased composition (basic and acidic residues).

The protein belongs to the glutaminase family. In terms of assembly, homotetramer, dimer of dimers. Tetramer composed of 68 and 65 kDa peptides in a 1:3 ratio. Can assemble into higher oligomers (in vitro), but the physiological significance of this is not clear. Interacts with RAF1 and MAP2K2. Interacts with ATCAY; the interaction is direct and may control GLS localization, negatively regulating its activity. Post-translationally, synthesized as a 74-kDa cytosolic precursor which is proteolytically processed by the mitochondrial-processing peptidase (MPP) via a 72-kDa intermediate to yield the mature mitochondrial 68- and 65-kDa subunits. As to expression, kidney, brain, and intestine.

It localises to the mitochondrion. The protein resides in the cytoplasm. The protein localises to the cytosol. It is found in the mitochondrion matrix. It catalyses the reaction L-glutamine + H2O = L-glutamate + NH4(+). Enzyme activity is increased by phosphate, due to increased kcat and increased substrate affinity. Its function is as follows. Catalyzes the first reaction in the primary pathway for the renal catabolism of glutamine. Plays a role in maintaining acid-base homeostasis. Regulates the levels of the neurotransmitter glutamate, the main excitatory neurotransmitter in the brain. The polypeptide is Glutaminase kidney isoform, mitochondrial (Gls) (Rattus norvegicus (Rat)).